The primary structure comprises 472 residues: Aspartyl/glutamyl-tRNA(Asn/Gln) amidotransferase subunit B (472 aa).

It belongs to the GatB/GatE family. GatB subfamily. Heterotrimer of A, B and C subunits.

It carries out the reaction L-glutamyl-tRNA(Gln) + L-glutamine + ATP + H2O = L-glutaminyl-tRNA(Gln) + L-glutamate + ADP + phosphate + H(+). The enzyme catalyses L-aspartyl-tRNA(Asn) + L-glutamine + ATP + H2O = L-asparaginyl-tRNA(Asn) + L-glutamate + ADP + phosphate + 2 H(+). Allows the formation of correctly charged Asn-tRNA(Asn) or Gln-tRNA(Gln) through the transamidation of misacylated Asp-tRNA(Asn) or Glu-tRNA(Gln) in organisms which lack either or both of asparaginyl-tRNA or glutaminyl-tRNA synthetases. The reaction takes place in the presence of glutamine and ATP through an activated phospho-Asp-tRNA(Asn) or phospho-Glu-tRNA(Gln). The protein is Aspartyl/glutamyl-tRNA(Asn/Gln) amidotransferase subunit B of Mycoplasmopsis agalactiae (strain NCTC 10123 / CIP 59.7 / PG2) (Mycoplasma agalactiae).